A 147-amino-acid chain; its full sequence is Large ribosomal subunit protein bL9 (147 aa).

Belongs to the bacterial ribosomal protein bL9 family.

In terms of biological role, binds to the 23S rRNA. The chain is Large ribosomal subunit protein bL9 from Cytophaga hutchinsonii (strain ATCC 33406 / DSM 1761 / CIP 103989 / NBRC 15051 / NCIMB 9469 / D465).